Reading from the N-terminus, the 91-residue chain is Putative ribonuclease inhibitor YrdF (91 aa).

Belongs to the barstar family.

Its subcellular location is the cytoplasm. In Bacillus subtilis (strain 168), this protein is Putative ribonuclease inhibitor YrdF (yrdF).